The chain runs to 508 residues: Protoporphyrinogen oxidase 2, chloroplastic/mitochondrial (508 aa).

The N-terminal 22 residues, 1 to 22 (MASGAVADHQIEAVSGKRVAVV), are a transit peptide targeting the chloroplast and mitochondrion. Residues 23–28 (GAGVSG), 46–47 (EA), and 68–71 (GANT) each bind FAD. The tract at residues 219-239 (KGGKSRDTKSSPGTKKGSRGS) is disordered. FAD contacts are provided by residues Val268 and 475–477 (LSV).

Belongs to the protoporphyrinogen/coproporphyrinogen oxidase family. Protoporphyrinogen oxidase subfamily. Requires FAD as cofactor.

The protein localises to the plastid. It is found in the chloroplast. Its subcellular location is the mitochondrion. The enzyme catalyses protoporphyrinogen IX + 3 O2 = protoporphyrin IX + 3 H2O2. It participates in porphyrin-containing compound metabolism; protoporphyrin-IX biosynthesis; protoporphyrin-IX from protoporphyrinogen-IX: step 1/1. It functions in the pathway porphyrin-containing compound metabolism; chlorophyll biosynthesis. Functionally, catalyzes the 6-electron oxidation of protoporphyrinogen-IX to form protoporphyrin-IX. This chain is Protoporphyrinogen oxidase 2, chloroplastic/mitochondrial (PPOX2), found in Arabidopsis thaliana (Mouse-ear cress).